A 179-amino-acid polypeptide reads, in one-letter code: Inner membrane-spanning protein YciB (179 aa).

5 helical membrane-spanning segments follow: residues 22 to 42, 50 to 70, 76 to 96, 121 to 141, and 149 to 169; these read IYAA…YSWV, MALI…FFHN, WKVT…QWVM, LAWA…AFWL, and FKVF…GIYI.

Belongs to the YciB family.

It localises to the cell inner membrane. Its function is as follows. Plays a role in cell envelope biogenesis, maintenance of cell envelope integrity and membrane homeostasis. In Klebsiella pneumoniae (strain 342), this protein is Inner membrane-spanning protein YciB.